The chain runs to 182 residues: CASP-like protein 5A1 (182 aa).

At 1-47 the chain is on the cytoplasmic side; sequence MEMASHPAVHPVALPPPYQAVGPPAPPAVRINDFPGSPGTLMGLALR. A helical membrane pass occupies residues 48-68; sequence FAQLGFALTALCIMVSIVGFS. The Extracellular portion of the chain corresponds to 69 to 72; it reads SVTA. The chain crosses the membrane as a helical span at residues 73–93; sequence FCFLVAAMVLQCIWSLCLGVL. Over 94 to 117 the chain is Cytoplasmic; sequence DCYALLTKRSLRNSLILSFFVVGD. A helical membrane pass occupies residues 118 to 138; that stretch reads WITSTMTFAGACAAAGITVLI. Topologically, residues 139–158 are extracellular; it reads DNDLNQCGPNHCNRFEAAAA. A helical membrane pass occupies residues 159-179; that stretch reads MAFMSWVITTISFFLSFWILV. The Cytoplasmic segment spans residues 180 to 182; it reads TCR.

It belongs to the Casparian strip membrane proteins (CASP) family. As to quaternary structure, homodimer and heterodimers.

It localises to the cell membrane. The chain is CASP-like protein 5A1 from Physcomitrium patens (Spreading-leaved earth moss).